Here is a 380-residue protein sequence, read N- to C-terminus: SAM and SH3 domain-containing protein 3 (380 aa).

The tract at residues 1-76 (MLRRKPSNAS…KSGKKLGKKW (76 aa)) is disordered. Positions 22 to 41 (LQRSSSFKDFAKSKPSSPVV) are enriched in low complexity. 3 positions are modified to phosphoserine: S27, S34, and S42. At T61 the chain carries Phosphothreonine. Phosphoserine is present on S97. 3 disordered regions span residues 98-174 (EEMA…TGPF), 237-256 (VGHA…KPKT), and 318-380 (TGSE…AGAP). T103 carries the post-translational modification Phosphothreonine. A Phosphoserine modification is found at S110. The residue at position 112 (T112) is a Phosphothreonine. S113 carries the phosphoserine modification. Position 116 is a phosphotyrosine (Y116). The residue at position 120 (S120) is a Phosphoserine. Polar residues predominate over residues 143–152 (RQASTGSELC). Positions 153 to 164 (SPSPGSGSFGEE) are enriched in low complexity. Positions 173–234 (PFCGRARVHT…KFIYVDVLPE (62 aa)) constitute an SH3 domain. The span at 241-255 (RPSRRQSKGKRPKPK) shows a compositional bias: basic residues. The SAM domain occupies 252-316 (PKPKTLHELL…LTAAELLLDY (65 aa)). T318 is modified (phosphothreonine). Acidic residues predominate over residues 318–327 (TGSEEAEEGA). A Phosphoserine modification is found at S320.

In terms of biological role, may function as a signaling adapter protein in lymphocytes. The chain is SAM and SH3 domain-containing protein 3 (SASH3) from Homo sapiens (Human).